Reading from the N-terminus, the 226-residue chain is HTH-type transcriptional regulator TcmR (226 aa).

Polar residues predominate over residues 1-16 (MDSAETDTPSTRSTPN). The tract at residues 1–25 (MDSAETDTPSTRSTPNGPGLRQRKL) is disordered. In terms of domain architecture, HTH tetR-type spans 26–86 (RRTRDQLIRE…TPISAIDEAF (61 aa)). The segment at residues 49-68 (TVEQIAEAVEVHPRTFFRHF) is a DNA-binding region (H-T-H motif).

The protein operates within antibiotic biosynthesis; tetracenomycin C biosynthesis. Functionally, represses transcription of the divergently oriented tcmR and tcmA (tetracenomycin C resistance and export) genes by binding to an intergenic operator region. This binding is inhibited by tetracenomycin C. In Streptomyces glaucescens, this protein is HTH-type transcriptional regulator TcmR (tcmR).